A 102-amino-acid polypeptide reads, in one-letter code: Small ribosomal subunit protein uS10 (102 aa).

Belongs to the universal ribosomal protein uS10 family. In terms of assembly, part of the 30S ribosomal subunit.

Functionally, involved in the binding of tRNA to the ribosomes. This is Small ribosomal subunit protein uS10 from Streptococcus suis (strain 98HAH33).